A 433-amino-acid chain; its full sequence is MAIDASGAAAPNSSGITVIIVGLGPTGLAAAIECHRRGHKVICFERNPKSYRLGDLINVTGNAARVLQGWGNGSVINDLQAFQCNLDTLEVYDETGDLKLSAPYNANQAKDNYMLRRSRLLDIFLQHLKNLDVDIHLGTEVTDYWETESSAGVTVGGKRIAADCVVVADGVHSKGRPQVSAEPFDLPSTDGTAFRAFFHASEIAQDPEASWILQDAGEGDCFKTFYGKGLVMMLGTAENHEYIFWSCGSKENVLAQSSAVAQVLDLIGDWPVSKRLAPLISKTPSDNCLDQTLFTRSPLNKWVSRKGRMIVLGDAAHPFLPHAGQGANQGIEDAAVLALCLQIAGKDDVPLALRVTEKLRYQRVAAIQKRGVEARDQSLSVDWENGGFTKKLTLYPAWLHDQDCIKQVYEEFDKAVAAVTKGHECTFGGIPVD.

FAD is bound by residues glutamate 45 and arginine 117. Residue arginine 195 is part of the active site. FAD is bound by residues aspartate 314 and alanine 327.

It belongs to the paxM FAD-dependent monooxygenase family. Requires FAD as cofactor.

Its pathway is alkaloid biosynthesis. FAD-dependent monooxygenase; part of the gene cluster that mediates the biosynthesis of notoamide, a fungal indole alkaloid that belongs to a family of natural products containing a characteristic bicyclo[2.2.2]diazaoctane core. The first step of notoamide biosynthesis involves coupling of L-proline and L-tryptophan by the bimodular NRPS notE', to produce cyclo-L-tryptophan-L-proline called brevianamide F. The reverse prenyltransferase notF' then acts as a deoxybrevianamide E synthase and converts brevianamide F to deoxybrevianamide E via reverse prenylation at C-2 of the indole ring leading to the bicyclo[2.2.2]diazaoctane core. Deoxybrevianamide E is further hydroxylated at C-6 of the indole ring, likely catalyzed by the cytochrome P450 monooxygenase notG', to yield 6-hydroxy-deoxybrevianamide E. 6-hydroxy-deoxybrevianamide E is a specific substrate of the prenyltransferase notC' for normal prenylation at C-7 to produce 6-hydroxy-7-prenyl-deoxybrevianamide, also called notoamide S. As the proposed pivotal branching point in notoamide biosynthesis, notoamide S can be diverted to notoamide E through an oxidative pyran ring closure putatively catalyzed by either notH' cytochrome P450 monooxygenase or the notD' FAD-linked oxidoreductase. This step would be followed by an indole 2,3-epoxidation-initiated pinacol-like rearrangement catalyzed by the notB' FAD-dependent monooxygenase leading to the formation of notoamide C and notoamide D. On the other hand notoamide S is converted to notoamide T by notH' (or notD'), a bifunctional oxidase that also functions as the intramolecular Diels-Alderase responsible for generation of (-)-notoamide T. To generate antipodal (+)-notoaminide T, notH (or notD) in Aspergillus strain MF297-2 is expected to catalyze a Diels-Alder reaction leading to the opposite stereochemistry. The remaining oxidoreductase notD' (or notH') likely catalyzes the oxidative pyran ring formation to yield (-)-stephacidin A. The FAD-dependent monooxygenase notI' is highly similar to notB' and is predicted to catalyze a similar conversion from (-)-stephacidin A to (+)-notoamide B via the 2,3-epoxidation of (-)-stephacidin A followed by a pinacol-type rearrangement. Finally, it remains unclear which enzyme could be responsible for the final hydroxylation steps leading to notoamide A and sclerotiamide. This is FAD-dependent monooxygenase notI' from Aspergillus versicolor.